Here is a 451-residue protein sequence, read N- to C-terminus: uncharacterized protein (451 aa).

2 disordered regions span residues 89–150 (PRLS…ISRY) and 164–222 (QVGE…KTFG). The segment covering 104–121 (QKPTISRESFVWESSASI) has biased composition (polar residues). Over residues 137–147 (SSTPSIEPESI) the composition is skewed to low complexity. Over residues 175–222 (RAADSENERRPSEVREAPESRRRRETSETGSDKSKAPPPIKEIKKTFG) the composition is skewed to basic and acidic residues. A helical transmembrane segment spans residues 358-376 (LIGLMLFQTTIFIISKIIA). The disordered stretch occupies residues 401 to 451 (RNGSSSGFASGTSSPLVFIPRTKRPSLVPSEKKMRGPSVTRDLAAEQERDA). The span at 403–414 (GSSSGFASGTSS) shows a compositional bias: low complexity.

The protein belongs to the IIV-6 067R family.

It localises to the membrane. This is an uncharacterized protein from Invertebrate iridescent virus 3 (IIV-3).